We begin with the raw amino-acid sequence, 252 residues long: Ribosomal RNA small subunit methyltransferase J (252 aa).

Residues 101–102 (RD), 117–118 (ER), 153–154 (SS), and D171 each bind S-adenosyl-L-methionine.

It belongs to the methyltransferase superfamily. RsmJ family.

It is found in the cytoplasm. The catalysed reaction is guanosine(1516) in 16S rRNA + S-adenosyl-L-methionine = N(2)-methylguanosine(1516) in 16S rRNA + S-adenosyl-L-homocysteine + H(+). In terms of biological role, specifically methylates the guanosine in position 1516 of 16S rRNA. In Salmonella paratyphi B (strain ATCC BAA-1250 / SPB7), this protein is Ribosomal RNA small subunit methyltransferase J.